A 294-amino-acid chain; its full sequence is Equatorin (294 aa).

A signal peptide spans 1-14 (MNFILFIFIPGVFS). The Vesicular segment spans residues 15 to 181 (LKSSTLKPTI…QPDLEDLKIK (167 aa)). N76 carries N-linked (GlcNAc...) asparagine glycosylation. Positions 107-126 (KSTIEEETTTSEPSHKNIQR) are disordered. The N-linked (GlcNAc...) asparagine glycan is linked to N143. A helical transmembrane segment spans residues 182–202 (IMLGISLMTLLLFVVLLAFCS). At 203–294 (ATLYKLRHLS…MHENDESVTR (92 aa)) the chain is on the cytoplasmic side.

Interacts with SNAP25. Post-translationally, highly N- and O-glycosylated; contains sialic acid. Isoform 1 is highly expressed in testis. Isoform 2 is expressed at low levels in skin and blood.

It localises to the cytoplasmic vesicle. Its subcellular location is the secretory vesicle. The protein localises to the acrosome membrane. It is found in the acrosome inner membrane. The protein resides in the acrosome outer membrane. In terms of biological role, acrosomal membrane-anchored protein involved in the process of fertilization and in acrosome biogenesis. The polypeptide is Equatorin (EQTN) (Homo sapiens (Human)).